We begin with the raw amino-acid sequence, 343 residues long: Methionine import ATP-binding protein MetN 3 (343 aa).

The region spanning 2–241 (IELSNITKVF…PKTPLAQKFI (240 aa)) is the ABC transporter domain. 38 to 45 (GASGAGKS) provides a ligand contact to ATP.

Belongs to the ABC transporter superfamily. Methionine importer (TC 3.A.1.24) family. In terms of assembly, the complex is composed of two ATP-binding proteins (MetN), two transmembrane proteins (MetI) and a solute-binding protein (MetQ).

Its subcellular location is the cell inner membrane. The catalysed reaction is L-methionine(out) + ATP + H2O = L-methionine(in) + ADP + phosphate + H(+). It catalyses the reaction D-methionine(out) + ATP + H2O = D-methionine(in) + ADP + phosphate + H(+). Functionally, part of the ABC transporter complex MetNIQ involved in methionine import. Responsible for energy coupling to the transport system. In Pectobacterium atrosepticum (strain SCRI 1043 / ATCC BAA-672) (Erwinia carotovora subsp. atroseptica), this protein is Methionine import ATP-binding protein MetN 3.